Here is a 368-residue protein sequence, read N- to C-terminus: Phospho-N-acetylmuramoyl-pentapeptide-transferase (368 aa).

The next 9 helical transmembrane spans lie at 23–43 (YITF…LVFG), 72–92 (IPTM…LLWA), 94–114 (IAEP…AVGF), 139–159 (VALG…SVLL), 170–190 (ITVD…TAVS), 201–221 (GLAA…AYLT), 238–258 (AGEV…FLWF), 265–286 (VFMG…ALLI), and 345–365 (KIVI…LLTL).

It belongs to the glycosyltransferase 4 family. MraY subfamily. Requires Mg(2+) as cofactor.

The protein localises to the cell inner membrane. It carries out the reaction UDP-N-acetyl-alpha-D-muramoyl-L-alanyl-gamma-D-glutamyl-meso-2,6-diaminopimeloyl-D-alanyl-D-alanine + di-trans,octa-cis-undecaprenyl phosphate = di-trans,octa-cis-undecaprenyl diphospho-N-acetyl-alpha-D-muramoyl-L-alanyl-D-glutamyl-meso-2,6-diaminopimeloyl-D-alanyl-D-alanine + UMP. It participates in cell wall biogenesis; peptidoglycan biosynthesis. In terms of biological role, catalyzes the initial step of the lipid cycle reactions in the biosynthesis of the cell wall peptidoglycan: transfers peptidoglycan precursor phospho-MurNAc-pentapeptide from UDP-MurNAc-pentapeptide onto the lipid carrier undecaprenyl phosphate, yielding undecaprenyl-pyrophosphoryl-MurNAc-pentapeptide, known as lipid I. The polypeptide is Phospho-N-acetylmuramoyl-pentapeptide-transferase (Chloroherpeton thalassium (strain ATCC 35110 / GB-78)).